Reading from the N-terminus, the 169-residue chain is Crossover junction endodeoxyribonuclease RuvC (169 aa).

Catalysis depends on residues D11, E71, and H143. Positions 11, 71, and 143 each coordinate Mg(2+).

Belongs to the RuvC family. Homodimer which binds Holliday junction (HJ) DNA. The HJ becomes 2-fold symmetrical on binding to RuvC with unstacked arms; it has a different conformation from HJ DNA in complex with RuvA. In the full resolvosome a probable DNA-RuvA(4)-RuvB(12)-RuvC(2) complex forms which resolves the HJ. The cofactor is Mg(2+).

It is found in the cytoplasm. The enzyme catalyses Endonucleolytic cleavage at a junction such as a reciprocal single-stranded crossover between two homologous DNA duplexes (Holliday junction).. Functionally, the RuvA-RuvB-RuvC complex processes Holliday junction (HJ) DNA during genetic recombination and DNA repair. Endonuclease that resolves HJ intermediates. Cleaves cruciform DNA by making single-stranded nicks across the HJ at symmetrical positions within the homologous arms, yielding a 5'-phosphate and a 3'-hydroxyl group; requires a central core of homology in the junction. The consensus cleavage sequence is 5'-(A/T)TT(C/G)-3'. Cleavage occurs on the 3'-side of the TT dinucleotide at the point of strand exchange. HJ branch migration catalyzed by RuvA-RuvB allows RuvC to scan DNA until it finds its consensus sequence, where it cleaves and resolves the cruciform DNA. The sequence is that of Crossover junction endodeoxyribonuclease RuvC from Mesorhizobium japonicum (strain LMG 29417 / CECT 9101 / MAFF 303099) (Mesorhizobium loti (strain MAFF 303099)).